The sequence spans 482 residues: Zinc metalloproteinase/disintegrin (482 aa).

Residues 1–20 form the signal peptide; sequence MIQVLLVTICLAAFPYQGSS. The propeptide occupies 21-189; the sequence is MILESGNVND…IKASQLVVTA (169 aa). One can recognise a Peptidase M12B domain in the interval 197–393; sequence RYIELVVVAD…HNPQCILNEP (197 aa). Residues glutamate 200 and aspartate 284 each coordinate Ca(2+). 2 cysteine pairs are disulfide-bonded: cysteine 308/cysteine 388 and cysteine 348/cysteine 372. Histidine 333 contributes to the Zn(2+) binding site. Glutamate 334 is a catalytic residue. 2 residues coordinate Zn(2+): histidine 337 and histidine 343. Ca(2+)-binding residues include cysteine 388 and asparagine 391. Positions 394 to 409 are excised as a propeptide; it reads LRTDTVSTPVSGNELL. The 82-residue stretch at 401–482 folds into the Disintegrin domain; that stretch reads TPVSGNELLE…AGCPRNPFHA (82 aa). Cystine bridges form between cysteine 415-cysteine 430, cysteine 417-cysteine 425, cysteine 424-cysteine 447, cysteine 438-cysteine 444, cysteine 443-cysteine 468, and cysteine 456-cysteine 475. Residues 460–462 carry the Cell attachment site motif; sequence RGD.

It belongs to the venom metalloproteinase (M12B) family. P-II subfamily. P-IId sub-subfamily. As to quaternary structure, homodimer; disulfide-linked (disintegrin). Zn(2+) serves as cofactor. As to expression, expressed by the venom gland.

It is found in the secreted. This recombinant protein hydrolyzes fibronectin, but has no effect on type I gelatin and type I to V collagens. Selectively hydrolyzes the Aalpha-chain of fibrinogen (FGA), but has no effect on fibrin. Functionally, inhibits ADP-induced platelet aggregation. Its function is as follows. Recombinant metalloproteinase-disintegrin Mt-d-I (393-408): hydrolyzes type I gelatin, type III and V collagens, but has no effect on type I, II, IV collagens and fibronectin. Selectively hydrolyzes the Aalpha-chain of fibrinogen, but has no effect on fibrin. May induce hemorrhage in vascular tissue. Strongly inhibits ADP-induced platelet aggregation. When concentrated, Mt-d-I undergoes autoproteolytic processing into metalloproteinase and disintegrin. The chain is Zinc metalloproteinase/disintegrin from Gloydius brevicauda (Korean slamosa snake).